We begin with the raw amino-acid sequence, 213 residues long: Large ribosomal subunit protein uL1 (213 aa).

This sequence belongs to the universal ribosomal protein uL1 family. As to quaternary structure, part of the 50S ribosomal subunit.

Functionally, binds directly to 23S rRNA. Probably involved in E site tRNA release. Its function is as follows. Protein L1 is also a translational repressor protein, it controls the translation of its operon by binding to its mRNA. This Nanoarchaeum equitans (strain Kin4-M) protein is Large ribosomal subunit protein uL1.